Consider the following 82-residue polypeptide: Small ribosomal subunit protein bS16 (82 aa).

Belongs to the bacterial ribosomal protein bS16 family.

The chain is Small ribosomal subunit protein bS16 from Natranaerobius thermophilus (strain ATCC BAA-1301 / DSM 18059 / JW/NM-WN-LF).